The primary structure comprises 1008 residues: Collagen alpha-1(I) chain (1008 aa).

Residues 1–1008 form a disordered region; that stretch reads GGISVPGPMG…PGPPGPPGPP (1008 aa). P18, P21, P23, P32, P35, P38, P52, P67, P73, P82, and P88 each carry 4-hydroxyproline. Residues 55–69 show a composition bias toward basic and acidic residues; sequence NGDDGEAGKPGRPGE. K91 is subject to 5-hydroxylysine; alternate. K91 is a glycosylation site (O-linked (Gal...) hydroxylysine; alternate). Phosphoserine is present on S97. Low complexity predominate over residues 105 to 121; the sequence is DAGPAGPKGEPGSPGEN. P115, P118, P124, P133, P139, P160, P169, P172, P199, P202, P214, P220, P229, P235, and P238 each carry 4-hydroxyproline. The span at 139–157 shows a compositional bias: low complexity; that stretch reads PGASGPAGARGNDGAAGAA. Over residues 159–171 the composition is skewed to pro residues; that stretch reads PPGPTGPAGPPGF. Low complexity predominate over residues 205 to 235; it reads AGAAGPAGNPGADGQPGAKGANGAPGIAGAP. Residues 236–255 are compositionally biased toward gly residues; the sequence is GFPGRGPSGPQGPSGPGPKG. K254 carries the 5-hydroxylysine modification. P260, P263, P275, P284, P299, P305, P314, and P320 each carry 4-hydroxyproline. The span at 309-318 shows a compositional bias: gly residues; it reads GERGGPGSRG. K329 is modified (5-hydroxylysine). 4-hydroxyproline occurs at positions 338, 347, 353, 359, 368, 371, 380, 389, 395, 407, 416, 425, 428, 446, 463, 469, 475, 481, 487, 493, 505, 514, 523, 535, 538, 544, 550, and 559. The span at 362–388 shows a compositional bias: low complexity; sequence KGLTGSPGSPGPDGKTGPPGPAGQDGR. Residues 397–416 show a composition bias toward low complexity; the sequence is ARGQAGVMGFPGPKGAAGEP. The segment covering 475–484 has biased composition (low complexity); it reads PGEAGKPGEQ. Positions 519 to 547 are enriched in low complexity; it reads PRGAPGNDGAKGDAGAPGAPGSQGAPGLQ. K571 bears the 5-hydroxylysine mark. Residues P577, P592, and P598 each carry the 4-hydroxyproline modification. Positions 604–618 are enriched in low complexity; the sequence is SGPSGPAGPTGARGA. Phosphoserine is present on S607. 8 positions are modified to 4-hydroxyproline: P619, P625, P628, P637, P643, P661, P670, and P679. The span at 631–658 shows a compositional bias: low complexity; it reads AGFAGPPGADGQPGAKGEPGDAGAKGDA. Positions 660–672 are enriched in pro residues; that stretch reads PPGPAGPTGPPGP. Position 682 is a 5-hydroxylysine (K682). Residues 687–703 are compositionally biased toward low complexity; it reads SAGPPGATGFPGAAGRV. P691 and P697 each carry 4-hydroxyproline. The residue at position 705 (P705) is a 3-hydroxyproline. 4-hydroxyproline occurs at positions 706, 717, 738, 747, 755, 764, 781, 790, 793, 799, 814, 820, 826, 835, and 841. Residues 731–740 show a composition bias toward low complexity; the sequence is ETGPAGRPGE. Positions 752-764 are enriched in low complexity; sequence KGSPGADGPAGAP. Positions 813–823 are enriched in pro residues; that stretch reads PPGPVGPPGLA. Over residues 825 to 840 the composition is skewed to low complexity; it reads PPGESGREGSPGAEGS. K850 carries the post-translational modification 5-hydroxylysine. A compositionally biased stretch (pro residues) spans 858-873; that stretch reads PGPPGAPGAPGAPGPV. 4-hydroxyproline is present on residues P861, P864, and P867. The span at 894-908 shows a compositional bias: low complexity; it reads AGPAGARGPAGPQGP. Over residues 909 to 923 the composition is skewed to basic and acidic residues; sequence RGDKGETGEQGDRGI. K912 bears the 5-hydroxylysine mark. K924 is subject to 5-hydroxylysine; alternate. Residue K924 is glycosylated (O-linked (Gal...) hydroxylysine; alternate). P939, P942, P960, and P975 each carry 4-hydroxyproline. The segment covering 942–975 has biased composition (low complexity); that stretch reads PGEQGPSGASGPAGPRGPPGSAGSPGKDGLNGLP. P980 carries the post-translational modification 3-hydroxyproline. A 4-hydroxyproline modification is found at P981. The segment covering 993–1008 has biased composition (pro residues); sequence VGPPGPPGPPGPPGPP. P995 bears the 3-hydroxyproline mark. P996 bears the 4-hydroxyproline mark. P998 is subject to 3-hydroxyproline. Residue P999 is modified to 4-hydroxyproline. 3-hydroxyproline is present on P1001. Residues P1002, P1005, and P1008 each carry the 4-hydroxyproline modification.

This sequence belongs to the fibrillar collagen family. As to quaternary structure, trimers of one alpha 2(I) and two alpha 1(I) chains. In terms of processing, contains mostly 4-hydroxyproline. Proline residues at the third position of the tripeptide repeating unit (G-X-Y) are hydroxylated in some or all of the chains. Contains 3-hydroxyproline at a few sites. This modification occurs on the first proline residue in the sequence motif Gly-Pro-Hyp, where Hyp is 4-hydroxyproline. Post-translationally, lysine residues at the third position of the tripeptide repeating unit (G-X-Y) are 5-hydroxylated in some or all of the chains. In terms of processing, O-glycosylated on hydroxylated lysine residues. The O-linked glycan consists of a Glc-Gal disaccharide. In terms of tissue distribution, expressed in bones.

It is found in the secreted. The protein resides in the extracellular space. It localises to the extracellular matrix. In terms of biological role, type I collagen is a member of group I collagen (fibrillar forming collagen). The polypeptide is Collagen alpha-1(I) chain (Paramylodon harlani (Harlan's ground sloth)).